The sequence spans 424 residues: 3-ketoacyl-CoA thiolase A, peroxisomal (424 aa).

The transit peptide at M1–C26 directs the protein to the peroxisome. Residues M1 to C26 are PTS2-type peroxisomal targeting signal. C123 acts as the Acyl-thioester intermediate in catalysis. N6-acetyllysine is present on residues K173 and K234. Active-site proton acceptor residues include H377 and C408.

The protein belongs to the thiolase-like superfamily. Thiolase family. As to quaternary structure, homodimer. Interacts (via PTS2-type peroxisomal targeting signal region) with PEX7; leading to its translocation into peroxisomes. Mainly expressed in liver and intestine.

It localises to the peroxisome. The catalysed reaction is an acyl-CoA + acetyl-CoA = a 3-oxoacyl-CoA + CoA. It carries out the reaction 2 acetyl-CoA = acetoacetyl-CoA + CoA. It catalyses the reaction tetradecanoyl-CoA + acetyl-CoA = 3-oxohexadecanoyl-CoA + CoA. The enzyme catalyses hexanoyl-CoA + acetyl-CoA = 3-oxooctanoyl-CoA + CoA. The catalysed reaction is 3-oxohexadecanedioyl-CoA + CoA = tetradecanedioyl-CoA + acetyl-CoA. It carries out the reaction 3-oxo-(6Z,9Z,12Z,15Z,18Z,21Z)-tetracosahexaenoyl-CoA + CoA = (4Z,7Z,10Z,13Z,16Z,19Z)-docosahexaenoyl-CoA + acetyl-CoA. It participates in lipid metabolism; peroxisomal fatty acid beta-oxidation. Responsible for the thiolytic cleavage of straight chain 3-keto fatty acyl-CoAs (3-oxoacyl-CoAs). Plays an important role in fatty acid peroxisomal beta-oxidation. Catalyzes the cleavage of short, medium, long, and very long straight chain 3-oxoacyl-CoAs. The chain is 3-ketoacyl-CoA thiolase A, peroxisomal from Mus musculus (Mouse).